The primary structure comprises 317 residues: MNNTTVRIATRKSALALWQAEYVKAQLEHFHDGINVELVPMTTKGDIILDTPLAKVGGKGLFVKELEVAMLEDRADIAVHSMKDVPVDFPEGLGLEVICPREDPRDAFVSNTIKSLSDLPQGSIVGTSSLRRQCQLKASRPDLDIRDLRGNVNTRLRKLDEGQYDAIILAAAGLIRLEMSERIAQFIEPEEMLPANGQGAVGIECRNDDATIKALLAPLECATTRIRVLAERAMNRALQGGCQVPIGSYGVISADGKNIHLRGLVGSVDGSEMIESEITGPVEEGEALGNKLAQELLSRGADKILQQVYSENDIKNS.

The residue at position 242 (Cys-242) is an S-(dipyrrolylmethanemethyl)cysteine.

This sequence belongs to the HMBS family. Monomer. Dipyrromethane serves as cofactor.

The enzyme catalyses 4 porphobilinogen + H2O = hydroxymethylbilane + 4 NH4(+). The protein operates within porphyrin-containing compound metabolism; protoporphyrin-IX biosynthesis; coproporphyrinogen-III from 5-aminolevulinate: step 2/4. Its function is as follows. Tetrapolymerization of the monopyrrole PBG into the hydroxymethylbilane pre-uroporphyrinogen in several discrete steps. The protein is Porphobilinogen deaminase of Colwellia psychrerythraea (strain 34H / ATCC BAA-681) (Vibrio psychroerythus).